A 316-amino-acid chain; its full sequence is Acetylglutamate kinase (316 aa).

Residues 76–77 (GG), Arg98, and Asn207 contribute to the substrate site.

It belongs to the acetylglutamate kinase family. ArgB subfamily.

Its subcellular location is the cytoplasm. The enzyme catalyses N-acetyl-L-glutamate + ATP = N-acetyl-L-glutamyl 5-phosphate + ADP. Its pathway is amino-acid biosynthesis; L-arginine biosynthesis; N(2)-acetyl-L-ornithine from L-glutamate: step 2/4. Its function is as follows. Catalyzes the ATP-dependent phosphorylation of N-acetyl-L-glutamate. The sequence is that of Acetylglutamate kinase from Paenarthrobacter aurescens (strain TC1).